The primary structure comprises 721 residues: BRCA1-A complex subunit RAP80 (721 aa).

Residues 1–65 are disordered; it reads MPRRKKKGKE…GLQKTKIKQS (65 aa). Positions 1 to 101 are necessary for transcriptional repression; sequence MPRRKKKGKE…SEQEAREVNS (101 aa). Lys-20 is covalently cross-linked (Glycyl lysine isopeptide (Lys-Gly) (interchain with G-Cter in SUMO2)). Phosphoserine is present on Ser-29. A Glycyl lysine isopeptide (Lys-Gly) (interchain with G-Cter in SUMO2) cross-link involves residue Lys-31. Ser-44 and Ser-46 each carry phosphoserine. Residues 60-78 carry the LR motif motif; it reads TKIKQSSRAKCLAKRKIAQ. Residues Lys-75 and Lys-90 each participate in a glycyl lysine isopeptide (Lys-Gly) (interchain with G-Cter in SUMO2) cross-link. Residues 80-99 enclose the UIM 1 domain; the sequence is TEEEQFALALKMSEQEAREV. Residues 93–204 form a disordered region; that stretch reads EQEAREVNSQ…SVSSGSWDQS (112 aa). A UIM-linker region spans residues 97 to 103; sequence REVNSQE. The segment at 100–200 is necessary for interaction with NR6A1 N-terminus; that stretch reads NSQEEEEEEL…EEPVSVSSGS (101 aa). Phosphoserine is present on Ser-101. The region spanning 105–124 is the UIM 2 domain; that stretch reads EEEELLRKAIAESLNSCRPS. Residues 117–130 are compositionally biased toward polar residues; the sequence is SLNSCRPSDASATR. Residue Ser-140 is modified to Phosphoserine. A compositionally biased stretch (low complexity) spans 194–204; sequence VSVSSGSWDQS. Ser-205 is subject to Phosphoserine. Lys-245 participates in a covalent cross-link: Glycyl lysine isopeptide (Lys-Gly) (interchain with G-Cter in SUMO2). Positions 270 to 400 are AIR; sequence TGGTVNYFWG…EEEPTTSHGQ (131 aa). Positions 334-369 are disordered; that stretch reads NECGQGEQASEKNEGISEDMGDEDKEERQESRASVW. Over residues 349–358 the composition is skewed to acidic residues; the sequence is ISEDMGDEDK. Residues Lys-382 and Lys-387 each participate in a glycyl lysine isopeptide (Lys-Gly) (interchain with G-Cter in SUMO2) cross-link. A disordered region spans residues 391–418; the sequence is EEEPTTSHGQSSQGLFVEETSEEGNSVP. The tract at residues 400–500 is necessary for interaction with NR6A1 C-terminus; the sequence is QSSQGLFVEE…EIHTSTFSSS (101 aa). Ser-402 and Ser-420 each carry phosphoserine. Lys-429 participates in a covalent cross-link: Glycyl lysine isopeptide (Lys-Gly) (interchain with G-Cter in SUMO2). Position 467 is a phosphoserine (Ser-467). The UBZ4-type zinc finger occupies 502-529; sequence QVSCPLCDQGFPPTKIERHAMYCNGLMG. Residues Cys-505, Cys-508, His-520, and Cys-524 each coordinate Zn(2+). The tract at residues 505 to 582 is zinc-finger-like region; the sequence is CPLCDQGFPP…REYQCHVESC (78 aa). Residues Lys-544, Lys-559, Lys-562, and Lys-607 each participate in a glycyl lysine isopeptide (Lys-Gly) (interchain with G-Cter in SUMO2) cross-link. A Phosphoserine modification is found at Ser-627. Residues Lys-635 and Lys-642 each participate in a glycyl lysine isopeptide (Lys-Gly) (interchain with G-Cter in SUMO2) cross-link. Ser-655 and Ser-679 each carry phosphoserine. Residues Lys-698 and Lys-699 each participate in a glycyl lysine isopeptide (Lys-Gly) (interchain with G-Cter in SUMO2) cross-link.

It belongs to the RAP80 family. Component of the ARISC complex, at least composed of UIMC1/RAP80, ABRAXAS1, BRCC3/BRCC36, BABAM2 and BABAM1/NBA1. Component of the BRCA1-A complex, at least composed of the BRCA1, BARD1, UIMC1/RAP80, ABRAXAS1, BRCC3/BRCC36, BABAM2 and BABAM1/NBA1. In the BRCA1-A complex, interacts directly with ABRAXAS1. Interacts with UBE2I. Interacts with NR6A1. Interacts with ESR1. Interacts with TSP57. Interacts with TRAIP. Sumoylated. Post-translationally, phosphorylated upon DNA damage by ATM or ATR.

The protein localises to the nucleus. Its function is as follows. Ubiquitin-binding protein. Specifically recognizes and binds 'Lys-63'-linked ubiquitin. Plays a central role in the BRCA1-A complex by specifically binding 'Lys-63'-linked ubiquitinated histones H2A and H2AX at DNA lesions sites, leading to target the BRCA1-BARD1 heterodimer to sites of DNA damage at double-strand breaks (DSBs). The BRCA1-A complex also possesses deubiquitinase activity that specifically removes 'Lys-63'-linked ubiquitin on histones H2A and H2AX. Also weakly binds monoubiquitin but with much less affinity than 'Lys-63'-linked ubiquitin. May interact with monoubiquitinated histones H2A and H2B; the relevance of such results is however unclear in vivo. Does not bind Lys-48'-linked ubiquitin. May indirectly act as a transcriptional repressor by inhibiting the interaction of NR6A1 with the corepressor NCOR1. This Sus scrofa (Pig) protein is BRCA1-A complex subunit RAP80 (UIMC1).